Here is a 252-residue protein sequence, read N- to C-terminus: Chitooligosaccharide deacetylase (252 aa).

Positions 61 and 125 each coordinate Mg(2+).

Belongs to the YdjC deacetylase family. ChbG subfamily. Homodimer. It depends on Mg(2+) as a cofactor.

The protein resides in the cytoplasm. It catalyses the reaction N,N'-diacetylchitobiose + H2O = N-acetyl-beta-D-glucosaminyl-(1-&gt;4)-D-glucosamine + acetate. It carries out the reaction diacetylchitobiose-6'-phosphate + H2O = N'-monoacetylchitobiose-6'-phosphate + acetate. It functions in the pathway glycan degradation; chitin degradation. Its function is as follows. Involved in the degradation of chitin. ChbG is essential for growth on the acetylated chitooligosaccharides chitobiose and chitotriose but is dispensable for growth on cellobiose and chitosan dimer, the deacetylated form of chitobiose. Deacetylation of chitobiose-6-P and chitotriose-6-P is necessary for both the activation of the chb promoter by the regulatory protein ChbR and the hydrolysis of phosphorylated beta-glucosides by the phospho-beta-glucosidase ChbF. Catalyzes the removal of only one acetyl group from chitobiose-6-P to yield monoacetylchitobiose-6-P, the inducer of ChbR and the substrate of ChbF. This is Chitooligosaccharide deacetylase from Salmonella enteritidis PT4 (strain P125109).